The primary structure comprises 269 residues: SF-assemblin (269 aa).

A disordered region spans residues 1-23 (MSISPGRSFSPMRASGLTGITSA). The nonhelical region stretch occupies residues 1-24 (MSISPGRSFSPMRASGLTGITSAG). The tract at residues 25-269 (PTAKLEHVSE…LQEGLKLVST (245 aa)) is rod. The stretch at 98–144 (AERSAAQHVDMQNSLKQAVDSLSNRLQDLHSLVREEREQRRNDIEHL) forms a coiled coil.

This sequence belongs to the SF-assemblin family.

Its subcellular location is the cytoplasm. The protein resides in the cytoskeleton. Its function is as follows. Major component of the striated microtubule-associated fibers (SMAFs; system-I-fibers). The sequence is that of SF-assemblin from Chlamydomonas moewusii (Chlamydomonas eugametos).